The sequence spans 427 residues: UPF0761 membrane protein Cphamn1_1013 (427 aa).

A run of 6 helical transmembrane segments spans residues 51 to 71, 107 to 127, 147 to 167, 188 to 208, 218 to 238, and 251 to 271; these read LLSLIPLMAVVLSVLSVSPVF, TVPTVGGIFLLIIALFLISTI, FTLYWTVLTLGPIIIGSGLVA, ILSYLPLVNSFLAFFLLYMLV, AVSGAFLATWLFELSKQWFSF, and GALSVIPLLFFWIYLIWVVAL.

The protein belongs to the UPF0761 family.

It localises to the cell inner membrane. This is UPF0761 membrane protein Cphamn1_1013 from Chlorobium phaeobacteroides (strain BS1).